Reading from the N-terminus, the 169-residue chain is NAD(P)H-quinone oxidoreductase subunit J, chloroplastic (169 aa).

Belongs to the complex I 30 kDa subunit family. NDH is composed of at least 16 different subunits, 5 of which are encoded in the nucleus.

It localises to the plastid. The protein resides in the chloroplast thylakoid membrane. It carries out the reaction a plastoquinone + NADH + (n+1) H(+)(in) = a plastoquinol + NAD(+) + n H(+)(out). The enzyme catalyses a plastoquinone + NADPH + (n+1) H(+)(in) = a plastoquinol + NADP(+) + n H(+)(out). Functionally, NDH shuttles electrons from NAD(P)H:plastoquinone, via FMN and iron-sulfur (Fe-S) centers, to quinones in the photosynthetic chain and possibly in a chloroplast respiratory chain. The immediate electron acceptor for the enzyme in this species is believed to be plastoquinone. Couples the redox reaction to proton translocation, and thus conserves the redox energy in a proton gradient. The sequence is that of NAD(P)H-quinone oxidoreductase subunit J, chloroplastic from Anthoceros angustus (Hornwort).